The following is a 620-amino-acid chain: Glutathione-regulated potassium-efflux system protein KefC (620 aa).

12 helical membrane passes run 4 to 24 (HTLI…PIAV), 26 to 46 (LGLG…PWGL), 54 to 74 (SILH…GLEL), 90 to 110 (GALQ…LLGL), 114 to 134 (VAEL…MQAM), 149 to 169 (FAVL…IPLL), 178 to 198 (MGAF…VVLL), 218 to 238 (VFSA…EEVG), 270 to 290 (GLLL…GTLL), 294 to 314 (LRIV…LWLI), 327 to 347 (WFAV…GAAQ), and 359 to 379 (SLTL…VILN). The RCK N-terminal domain occupies 399 to 518 (QPRVIIAGFG…AGVEKPERET (120 aa)). Residues 597 to 620 (GWQGTEEGKHTGNMADEPETKPSS) form a disordered region.

The protein belongs to the monovalent cation:proton antiporter 2 (CPA2) transporter (TC 2.A.37) family. KefC subfamily. In terms of assembly, homodimer. Interacts with the regulatory subunit KefF.

Its subcellular location is the cell inner membrane. Pore-forming subunit of a potassium efflux system that confers protection against electrophiles. Catalyzes K(+)/H(+) antiport. The sequence is that of Glutathione-regulated potassium-efflux system protein KefC from Escherichia coli O7:K1 (strain IAI39 / ExPEC).